The primary structure comprises 725 residues: Manganese-exporting P-type ATPase (725 aa).

Positions Gly25–Ala92 constitute an HMA domain. 6 helical membrane-spanning segments follow: residues His101 to Ala119, Leu142 to Leu160, Thr165 to Leu179, Leu188 to Asp202, Val335 to Lys359, and Met365 to Ala383. The active-site 4-aspartylphosphate intermediate is Asp416. The Mg(2+) site is built by Asp416, Thr418, and Asp618. Helical transmembrane passes span Ala669–Leu688 and Pro698–Ser717.

The protein belongs to the cation transport ATPase (P-type) (TC 3.A.3) family. Type IB subfamily.

It is found in the cell membrane. The catalysed reaction is Mn(2+)(in) + ATP + H2O = Mn(2+)(out) + ADP + phosphate + H(+). In terms of biological role, high affinity, slow turnover Mn(2+) transporting ATPase. This chain is Manganese-exporting P-type ATPase (ctpC), found in Mycobacterium leprae (strain TN).